A 236-amino-acid chain; its full sequence is Small ribosomal subunit protein uS2c (236 aa).

It belongs to the universal ribosomal protein uS2 family.

It is found in the plastid. The protein resides in the chloroplast. The sequence is that of Small ribosomal subunit protein uS2c (rps2) from Ceratophyllum demersum (Rigid hornwort).